The primary structure comprises 148 residues: Large ribosomal subunit protein bL9 (148 aa).

Belongs to the bacterial ribosomal protein bL9 family.

Binds to the 23S rRNA. The protein is Large ribosomal subunit protein bL9 of Bifidobacterium animalis subsp. lactis (strain AD011).